The sequence spans 399 residues: S-adenosylmethionine synthase (399 aa).

Residue histidine 17 participates in ATP binding. Aspartate 19 contributes to the Mg(2+) binding site. Glutamate 45 contacts K(+). L-methionine contacts are provided by glutamate 58 and glutamine 101. Residues 101 to 111 (QSADIAMGVDQ) form a flexible loop region. ATP is bound by residues 177 to 179 (DGK), 244 to 245 (RF), aspartate 253, 259 to 260 (RK), alanine 276, and lysine 280. Aspartate 253 lines the L-methionine pocket. Lysine 284 is an L-methionine binding site.

This sequence belongs to the AdoMet synthase family. Homotetramer; dimer of dimers. The cofactor is Mg(2+). It depends on K(+) as a cofactor.

It localises to the cytoplasm. The catalysed reaction is L-methionine + ATP + H2O = S-adenosyl-L-methionine + phosphate + diphosphate. The protein operates within amino-acid biosynthesis; S-adenosyl-L-methionine biosynthesis; S-adenosyl-L-methionine from L-methionine: step 1/1. Its function is as follows. Catalyzes the formation of S-adenosylmethionine (AdoMet) from methionine and ATP. The overall synthetic reaction is composed of two sequential steps, AdoMet formation and the subsequent tripolyphosphate hydrolysis which occurs prior to release of AdoMet from the enzyme. The chain is S-adenosylmethionine synthase from Bacillus mycoides (strain KBAB4) (Bacillus weihenstephanensis).